The following is a 233-amino-acid chain: Small ribosomal subunit protein uS2 (233 aa).

This sequence belongs to the universal ribosomal protein uS2 family.

The polypeptide is Small ribosomal subunit protein uS2 (Clostridium botulinum (strain Eklund 17B / Type B)).